The sequence spans 283 residues: NAD kinase (283 aa).

D68 acts as the Proton acceptor in catalysis. NAD(+) is bound by residues 68–69 (DG), 142–143 (ND), R153, D172, 183–188 (TAYSLS), and Q242.

It belongs to the NAD kinase family. The cofactor is a divalent metal cation.

It is found in the cytoplasm. It catalyses the reaction NAD(+) + ATP = ADP + NADP(+) + H(+). Functionally, involved in the regulation of the intracellular balance of NAD and NADP, and is a key enzyme in the biosynthesis of NADP. Catalyzes specifically the phosphorylation on 2'-hydroxyl of the adenosine moiety of NAD to yield NADP. This chain is NAD kinase, found in Thermoanaerobacter pseudethanolicus (strain ATCC 33223 / 39E) (Clostridium thermohydrosulfuricum).